The primary structure comprises 719 residues: T-cell immunomodulatory protein homolog (719 aa).

The first 32 residues, 1 to 32, serve as a signal peptide directing secretion; the sequence is MYNFLSCKKKSIILQVLLIICTYNILLNFVNI. At 33-677 the chain is on the extracellular side; sequence FVNNNEKNHK…LSVNPSKKFY (645 aa). N-linked (GlcNAc...) asparagine glycans are attached at residues Asn-144, Asn-277, Asn-410, Asn-540, and Asn-659. The chain crosses the membrane as a helical span at residues 678-697; the sequence is SILYITLICLSVIGVLIFIL. Residues 698 to 719 lie on the Cytoplasmic side of the membrane; the sequence is DRKEKVEDSKEELGFKSHFVIG.

The protein belongs to the TIP family.

It localises to the membrane. In terms of biological role, may protect the parasite against attack by the host immune system by immunomodulation. This chain is T-cell immunomodulatory protein homolog, found in Plasmodium falciparum (isolate 3D7).